A 275-amino-acid chain; its full sequence is Large ribosomal subunit protein uL2 (275 aa).

The interval 214–275 (RWRGNRPTVR…NKFILSHRNK (62 aa)) is disordered. Residues 255 to 275 (KGKKTRSNKRTNKFILSHRNK) show a composition bias toward basic residues.

The protein belongs to the universal ribosomal protein uL2 family. As to quaternary structure, part of the 50S ribosomal subunit. Forms a bridge to the 30S subunit in the 70S ribosome.

In terms of biological role, one of the primary rRNA binding proteins. Required for association of the 30S and 50S subunits to form the 70S ribosome, for tRNA binding and peptide bond formation. It has been suggested to have peptidyltransferase activity; this is somewhat controversial. Makes several contacts with the 16S rRNA in the 70S ribosome. The protein is Large ribosomal subunit protein uL2 of Blochmanniella pennsylvanica (strain BPEN).